A 152-amino-acid polypeptide reads, in one-letter code: UPF0266 membrane protein PM0830 (152 aa).

Helical transmembrane passes span 1-21, 45-65, and 66-86; these read MMII…YAFY, KDAL…YTNL, and SSAT…AAFI.

The protein belongs to the UPF0266 family.

Its subcellular location is the cell inner membrane. This chain is UPF0266 membrane protein PM0830, found in Pasteurella multocida (strain Pm70).